Consider the following 208-residue polypeptide: Exosome complex component CSL4 homolog (208 aa).

In terms of assembly, component of the RNA exosome complex. Ubiquitously expressed.

Its subcellular location is the nucleus. The protein resides in the nucleolus. The protein localises to the nucleoplasm. Non-catalytic component of the RNA exosome complex which has 3'-&gt;5' exoribonuclease activity and participates in a multitude of cellular RNA processing and degradation events. Involved in regulation of antisense ribosomal siRNA production. Involved in response to cold-warm shock. This chain is Exosome complex component CSL4 homolog, found in Caenorhabditis elegans.